The chain runs to 378 residues: Myoglobin (378 aa).

Ala-2 is subject to Blocked amino end (Ala). Position 332 (His-332) interacts with heme.

The protein belongs to the indoleamine 2,3-dioxygenase family. Homodimer. Requires heme as cofactor.

In terms of biological role, serves a reserve supply of oxygen and facilitates the movement of oxygen within muscles. This is Myoglobin from Haliotis diversicolor (Abalone).